The primary structure comprises 27 residues: Vasotocin-neurophysin VT (27 aa).

C1 and C6 are disulfide-bonded. G9 bears the Glycine amide mark.

It belongs to the vasopressin/oxytocin family.

In terms of biological role, vasotocin is an antidiuretic hormone. The chain is Vasotocin-neurophysin VT from Sclerophrys regularis (Common African toad).